The following is a 240-amino-acid chain: uncharacterized protein (240 aa).

The N-terminal stretch at 1–17 is a signal peptide; that stretch reads MRMAFMLLALLFSFRNA.

This is an uncharacterized protein from Treponema pallidum (strain Nichols).